The primary structure comprises 268 residues: D-alanyl-D-alanine carboxypeptidase (268 aa).

Residues 25–47 (AFLWAFIISFTVCTLFLGWRLVS) form a helical membrane-spanning segment. Residues glutamine 151, 179–181 (WVA), and serine 186 each bind substrate. Zn(2+) is bound by residues histidine 188 and aspartate 195. Glutamate 238 functions as the Proton donor/acceptor in the catalytic mechanism. A Zn(2+)-binding site is contributed by histidine 241.

It belongs to the peptidase M15B family. As to quaternary structure, monomer. It depends on Zn(2+) as a cofactor.

It is found in the cell membrane. Carboxypeptidase activity is insensitive to beta-lactams since it is not affected by penicillin G or ampicillin and is inhibited only by very high concentrations of cefalotin and cefoxitin. Carboxypeptidase that cleaves the C-terminal D-alanine residue from the peptidoglycan-derived pentapeptide L-Ala-gamma-D-Glu-L-Lys-D-Ala-D-Ala in vitro. Therefore, should contribute in vivo to the hydrolysis of the D-alanyl-D-alanine-containing peptidoglycan precursors. May increase the level of glycopeptide antibiotics resistance by decreasing the availability of D-Ala-D-Ala termini from the cell surface, which constitute the antibiotic target residues. This is D-alanyl-D-alanine carboxypeptidase from Enterococcus faecalis (strain ATCC 700802 / V583).